The sequence spans 661 residues: UvrABC system protein B (661 aa).

One can recognise a Helicase ATP-binding domain in the interval 25–182; that stretch reads AGLNSKKRSQ…NDLINLQYKR (158 aa). 38-45 contributes to the ATP binding site; the sequence is GITGSGKT. The Beta-hairpin signature appears at 91–114; that stretch reads YYDYYQPEAYIARTDTFIEKDSSI. One can recognise a Helicase C-terminal domain in the interval 430–592; it reads QVEDLISEIQ…IIPKTINRAI (163 aa). The 36-residue stretch at 621 to 656 folds into the UVR domain; it reads KANINKLNKEMLKAASNLEFEQAAKLRDQLKTLEAA.

The protein belongs to the UvrB family. As to quaternary structure, forms a heterotetramer with UvrA during the search for lesions. Interacts with UvrC in an incision complex.

Its subcellular location is the cytoplasm. In terms of biological role, the UvrABC repair system catalyzes the recognition and processing of DNA lesions. A damage recognition complex composed of 2 UvrA and 2 UvrB subunits scans DNA for abnormalities. Upon binding of the UvrA(2)B(2) complex to a putative damaged site, the DNA wraps around one UvrB monomer. DNA wrap is dependent on ATP binding by UvrB and probably causes local melting of the DNA helix, facilitating insertion of UvrB beta-hairpin between the DNA strands. Then UvrB probes one DNA strand for the presence of a lesion. If a lesion is found the UvrA subunits dissociate and the UvrB-DNA preincision complex is formed. This complex is subsequently bound by UvrC and the second UvrB is released. If no lesion is found, the DNA wraps around the other UvrB subunit that will check the other stand for damage. The chain is UvrABC system protein B from Rickettsia akari (strain Hartford).